The following is a 497-amino-acid chain: Putative aldehyde dehydrogenase AldA (497 aa).

213–219 (GKGSESG) is an NAD(+) binding site. Active-site residues include glutamate 257 and cysteine 291.

It belongs to the aldehyde dehydrogenase family.

The catalysed reaction is an aldehyde + NAD(+) + H2O = a carboxylate + NADH + 2 H(+). This is Putative aldehyde dehydrogenase AldA (aldA) from Staphylococcus haemolyticus (strain JCSC1435).